The chain runs to 162 residues: Mitochondrial fission process protein 1 (162 aa).

Helical transmembrane passes span 36-56, 81-101, and 128-148; these read SLVK…YVAA, AIIA…IPGF, and TVTA…DAFV.

It belongs to the MTFP1 family.

The protein localises to the mitochondrion inner membrane. Functionally, involved in the mitochondrial division probably by regulating membrane fission. Loss-of-function leads to apoptosis. This is Mitochondrial fission process protein 1 from Caenorhabditis briggsae.